Consider the following 491-residue polypeptide: MSARVLMVQGCTSDAGKSTLVAALCRWLHRQGVAVAPFKPQNMALNSAVTVDGGEIGRAQAVQAQACGLPPHTDFNPVLLKPNSDTGAQVIVHGHPVATLDAVGYHAYKRTARTAVLASHARLVERFDVLLVEGAGSPAEINLREHDIANMGYAEAVDCAVILIADINRGGVFAHLVGTLALLSPSERARVAGFVINRFRGDLALLQPGLEWLERETGKPVLGVLPYLHGLQLDAEDALPRGPVHKPQARLRVVVPVLPRISNHTDLDALLAHPQVDVQLIGPGQSVPPCDLIVLPGSKSTRQDLAWLRAQGWEAAIARHLRYGGKLLGICGGLQMLGEQVHDPHGIEGAPGSSAGLGWLALQTALQPHKQLHRVGGRLLPSGAAVSGYEIHCGLSTGAALARPLLQLDDGRSDGAVSEDGQVMGTYLHGIFDHPAALAALLAWAGLADAAPLDLASLREATLERLADTVHAHLDIAALTRLTLGEPACAN.

The 188-residue stretch at 250-437 (RLRVVVPVLP…LHGIFDHPAA (188 aa)) folds into the GATase cobBQ-type domain. Cys-331 functions as the Nucleophile in the catalytic mechanism. The active site involves His-429.

The protein belongs to the CobB/CobQ family. CobQ subfamily.

It functions in the pathway cofactor biosynthesis; adenosylcobalamin biosynthesis. In terms of biological role, catalyzes amidations at positions B, D, E, and G on adenosylcobyrinic A,C-diamide. NH(2) groups are provided by glutamine, and one molecule of ATP is hydrogenolyzed for each amidation. This chain is Cobyric acid synthase, found in Xanthomonas campestris pv. campestris (strain B100).